Reading from the N-terminus, the 145-residue chain is D-aminoacyl-tRNA deacylase (145 aa).

The Gly-cisPro motif, important for rejection of L-amino acids signature appears at 137-138 (GP).

The protein belongs to the DTD family. Homodimer.

Its subcellular location is the cytoplasm. It carries out the reaction glycyl-tRNA(Ala) + H2O = tRNA(Ala) + glycine + H(+). The catalysed reaction is a D-aminoacyl-tRNA + H2O = a tRNA + a D-alpha-amino acid + H(+). In terms of biological role, an aminoacyl-tRNA editing enzyme that deacylates mischarged D-aminoacyl-tRNAs. Also deacylates mischarged glycyl-tRNA(Ala), protecting cells against glycine mischarging by AlaRS. Acts via tRNA-based rather than protein-based catalysis; rejects L-amino acids rather than detecting D-amino acids in the active site. By recycling D-aminoacyl-tRNA to D-amino acids and free tRNA molecules, this enzyme counteracts the toxicity associated with the formation of D-aminoacyl-tRNA entities in vivo and helps enforce protein L-homochirality. This chain is D-aminoacyl-tRNA deacylase, found in Salmonella arizonae (strain ATCC BAA-731 / CDC346-86 / RSK2980).